Reading from the N-terminus, the 545-residue chain is CTP synthase (545 aa).

Positions 1-266 are amidoligase domain; sequence MTKNYIFITG…DDYICNYFKL (266 aa). A CTP-binding site is contributed by S14. S14 is a binding site for UTP. ATP contacts are provided by residues 15–20 and D72; that span reads SLGKGI. Residues D72 and E140 each coordinate Mg(2+). Residues 147–149, 187–192, and K223 each bind CTP; these read DIE and KTKPTQ. Residues 187 to 192 and K223 contribute to the UTP site; that span reads KTKPTQ. 239-241 provides a ligand contact to ATP; the sequence is KDV. One can recognise a Glutamine amidotransferase type-1 domain in the interval 291–543; the sequence is VIGIIGKYIK…IKSAGKHKKN (253 aa). G352 is an L-glutamine binding site. C379 acts as the Nucleophile; for glutamine hydrolysis in catalysis. L-glutamine contacts are provided by residues 380 to 383, E403, and R471; that span reads LGMQ. Active-site residues include H516 and E518.

The protein belongs to the CTP synthase family. In terms of assembly, homotetramer.

It catalyses the reaction UTP + L-glutamine + ATP + H2O = CTP + L-glutamate + ADP + phosphate + 2 H(+). It carries out the reaction L-glutamine + H2O = L-glutamate + NH4(+). The enzyme catalyses UTP + NH4(+) + ATP = CTP + ADP + phosphate + 2 H(+). It participates in pyrimidine metabolism; CTP biosynthesis via de novo pathway; CTP from UDP: step 2/2. With respect to regulation, allosterically activated by GTP, when glutamine is the substrate; GTP has no effect on the reaction when ammonia is the substrate. The allosteric effector GTP functions by stabilizing the protein conformation that binds the tetrahedral intermediate(s) formed during glutamine hydrolysis. Inhibited by the product CTP, via allosteric rather than competitive inhibition. Functionally, catalyzes the ATP-dependent amination of UTP to CTP with either L-glutamine or ammonia as the source of nitrogen. Regulates intracellular CTP levels through interactions with the four ribonucleotide triphosphates. This chain is CTP synthase, found in Buchnera aphidicola subsp. Acyrthosiphon pisum (strain Tuc7).